Consider the following 389-residue polypeptide: Choline/ethanolaminephosphotransferase 2 (389 aa).

8 helical membrane passes run 49 to 69, 141 to 161, 176 to 196, 220 to 240, 252 to 272, 286 to 306, 321 to 338, and 350 to 370; these read MITLMGFMFLLTSALLGYIYS, TFWFWVISAVPFFGATWEHYF, GLALIYCGHFFTAIVGAEWWA, IILFSMIFFAVIPTLAINTSN, MLLALAMLYPLVTLIAGVLIW, HLVVLGTGLAFGFLVGRMILA, MSLLYLPFALANALTARL, and VLLGYCIFTLSLYAHFATSVI.

The protein belongs to the CDP-alcohol phosphatidyltransferase class-I family. The cofactor is Mg(2+). Mn(2+) serves as cofactor.

It localises to the membrane. The catalysed reaction is CDP-ethanolamine + a 1,2-diacyl-sn-glycerol = a 1,2-diacyl-sn-glycero-3-phosphoethanolamine + CMP + H(+). The enzyme catalyses CDP-choline + a 1,2-diacyl-sn-glycerol = a 1,2-diacyl-sn-glycero-3-phosphocholine + CMP + H(+). It participates in phospholipid metabolism; phosphatidylethanolamine biosynthesis; phosphatidylethanolamine from ethanolamine: step 3/3. The protein operates within phospholipid metabolism; phosphatidylcholine biosynthesis; phosphatidylcholine from phosphocholine: step 2/2. Its function is as follows. Catalyzes both phosphatidylcholine and phosphatidylethanolamine biosynthesis from CDP-choline and CDP-ethanolamine, respectively. Has a higher cholinephosphotransferase activity than ethanolaminephosphotransferase activity. The sequence is that of Choline/ethanolaminephosphotransferase 2 (AAPT2) from Arabidopsis thaliana (Mouse-ear cress).